We begin with the raw amino-acid sequence, 459 residues long: Ribulose bisphosphate carboxylase (459 aa).

Asn-111 provides a ligand contact to substrate. Lys-166 (proton acceptor) is an active-site residue. Lys-168 provides a ligand contact to substrate. Mg(2+)-binding residues include Lys-191, Asp-193, and Glu-194. N6-carboxylysine is present on Lys-191. Residue His-287 is the Proton acceptor of the active site. Positions 288, 321, and 368 each coordinate substrate.

It belongs to the RuBisCO large chain family. Type II subfamily. Homodimer. The cofactor is Mg(2+).

The catalysed reaction is 2 (2R)-3-phosphoglycerate + 2 H(+) = D-ribulose 1,5-bisphosphate + CO2 + H2O. It carries out the reaction D-ribulose 1,5-bisphosphate + O2 = 2-phosphoglycolate + (2R)-3-phosphoglycerate + 2 H(+). In terms of biological role, ruBisCO catalyzes two reactions: the carboxylation of D-ribulose 1,5-bisphosphate, the primary event in carbon dioxide fixation, as well as the oxidative fragmentation of the pentose substrate. Both reactions occur simultaneously and in competition at the same active site. This chain is Ribulose bisphosphate carboxylase, found in Cereibacter sphaeroides (strain ATCC 17029 / ATH 2.4.9) (Rhodobacter sphaeroides).